The following is a 145-amino-acid chain: ATP synthase epsilon chain (145 aa).

It belongs to the ATPase epsilon chain family. In terms of assembly, F-type ATPases have 2 components, CF(1) - the catalytic core - and CF(0) - the membrane proton channel. CF(1) has five subunits: alpha(3), beta(3), gamma(1), delta(1), epsilon(1). CF(0) has three main subunits: a, b and c.

The protein resides in the cell inner membrane. Functionally, produces ATP from ADP in the presence of a proton gradient across the membrane. This Francisella tularensis subsp. mediasiatica (strain FSC147) protein is ATP synthase epsilon chain.